The sequence spans 177 residues: Peptide methionine sulfoxide reductase MsrA (177 aa).

Cysteine 15 is an active-site residue.

This sequence belongs to the MsrA Met sulfoxide reductase family.

The enzyme catalyses L-methionyl-[protein] + [thioredoxin]-disulfide + H2O = L-methionyl-(S)-S-oxide-[protein] + [thioredoxin]-dithiol. It carries out the reaction [thioredoxin]-disulfide + L-methionine + H2O = L-methionine (S)-S-oxide + [thioredoxin]-dithiol. Functionally, has an important function as a repair enzyme for proteins that have been inactivated by oxidation. Catalyzes the reversible oxidation-reduction of methionine sulfoxide in proteins to methionine. The polypeptide is Peptide methionine sulfoxide reductase MsrA (Listeria innocua serovar 6a (strain ATCC BAA-680 / CLIP 11262)).